Consider the following 185-residue polypeptide: Ribosome-recycling factor (185 aa).

This sequence belongs to the RRF family.

It is found in the cytoplasm. Responsible for the release of ribosomes from messenger RNA at the termination of protein biosynthesis. May increase the efficiency of translation by recycling ribosomes from one round of translation to another. The protein is Ribosome-recycling factor of Campylobacter hominis (strain ATCC BAA-381 / DSM 21671 / CCUG 45161 / LMG 19568 / NCTC 13146 / CH001A).